The chain runs to 155 residues: SsrA-binding protein (155 aa).

The protein belongs to the SmpB family.

It is found in the cytoplasm. Functionally, required for rescue of stalled ribosomes mediated by trans-translation. Binds to transfer-messenger RNA (tmRNA), required for stable association of tmRNA with ribosomes. tmRNA and SmpB together mimic tRNA shape, replacing the anticodon stem-loop with SmpB. tmRNA is encoded by the ssrA gene; the 2 termini fold to resemble tRNA(Ala) and it encodes a 'tag peptide', a short internal open reading frame. During trans-translation Ala-aminoacylated tmRNA acts like a tRNA, entering the A-site of stalled ribosomes, displacing the stalled mRNA. The ribosome then switches to translate the ORF on the tmRNA; the nascent peptide is terminated with the 'tag peptide' encoded by the tmRNA and targeted for degradation. The ribosome is freed to recommence translation, which seems to be the essential function of trans-translation. This is SsrA-binding protein from Helicobacter hepaticus (strain ATCC 51449 / 3B1).